Here is a 975-residue protein sequence, read N- to C-terminus: 5'-3' exoribonuclease 2 homolog (975 aa).

A CCHC-type zinc finger spans residues 262 to 279 (RACDLCGQYGHELKECRG). Disordered stretches follow at residues 424-443 (MQMY…GRGQ) and 505-532 (SPAD…EGPK). Residues 534-787 (DIRLYESGWK…GICVLYEDPE (254 aa)) are interaction with paxt-1. The span at 804–821 (EPEKTLKPDDWNDRRDGR) shows a compositional bias: basic and acidic residues. The segment at 804 to 975 (EPEKTLKPDD…GGYHGNSSWR (172 aa)) is disordered. 3 stretches are compositionally biased toward gly residues: residues 850-860 (RGGGGGGGGYR), 886-895 (NYGGRDGGGP), and 908-932 (GYQG…GGGS).

It belongs to the 5'-3' exonuclease family. XRN2/RAT1 subfamily. In terms of assembly, interacts with paxt-1 (via N-terminus); the interaction is direct and results in stabilization of xrn-2 in the complex. Expressed in the pharyngeal myoepithelium and intestine. Also expressed in several anterior neurons including the sensory neurons, as well as the interneuron PVT and the pharyngeal motorneuron M5.

Its subcellular location is the nucleus. Functionally, possesses 5'-&gt;3' exoribonuclease activity. Plays a role in maintenance of steady-state concentration and turnover of microRNAs (miRNA) by degradation of mature miRNA. Degradation role is enhanced when in complex with paxt-1. Partially redundant to xrn-1 in miRNA guide strand degradation. Implicated in differential regulation of mRNAs such as let-7 by controlling the accumulation of mature miRNA. Positively regulates molting of the pharyngeal cuticle. The polypeptide is 5'-3' exoribonuclease 2 homolog (Caenorhabditis elegans).